The primary structure comprises 374 residues: Pyruvate dehydrogenase E1 component subunit beta-1, mitochondrial (374 aa).

A mitochondrion-targeting transit peptide spans 1–34; sequence MLGIARRRLGSGCALGQLMQALRPAAAAAAARTY. Residue Glu-97 coordinates thiamine diphosphate. Residues Ile-150, Ala-198, Ile-199, and Asp-201 each contribute to the K(+) site.

In terms of assembly, tetramer of 2 alpha and 2 beta subunits. It depends on thiamine diphosphate as a cofactor.

Its subcellular location is the mitochondrion matrix. It catalyses the reaction N(6)-[(R)-lipoyl]-L-lysyl-[protein] + pyruvate + H(+) = N(6)-[(R)-S(8)-acetyldihydrolipoyl]-L-lysyl-[protein] + CO2. Its function is as follows. The pyruvate dehydrogenase complex catalyzes the overall conversion of pyruvate to acetyl-CoA and CO(2). It contains multiple copies of three enzymatic components: pyruvate dehydrogenase (E1), dihydrolipoamide acetyltransferase (E2) and lipoamide dehydrogenase (E3). The sequence is that of Pyruvate dehydrogenase E1 component subunit beta-1, mitochondrial from Oryza sativa subsp. japonica (Rice).